The primary structure comprises 420 residues: Pre-mRNA-splicing factor RBM22 (420 aa).

A2 carries the post-translational modification N-acetylalanine. A phosphoserine mark is found at S4 and S102. Residues K139 and K149 each participate in a glycyl lysine isopeptide (Lys-Gly) (interchain with G-Cter in SUMO2) cross-link. The segment at 159 to 186 adopts a C3H1-type zinc-finger fold; sequence RNRPHICSFWVKGECKRGEECPYRHEKP. K212 is modified (N6-acetyllysine). The 74-residue stretch at 232 to 305 folds into the RRM domain; sequence TTLYVGGLGD…RRLNVKWGRS (74 aa). Residue K290 forms a Glycyl lysine isopeptide (Lys-Gly) (interchain with G-Cter in SUMO2) linkage. Disordered regions lie at residues 303 to 343 and 372 to 420; these read GRSQ…AAEE and APPP…HSSP. The segment covering 309–318 has biased composition (basic and acidic residues); sequence RGKEKEKDGT.

The protein belongs to the SLT11 family. Component of the pre-catalytic and catalytic spliceosome complexes. Component of the postcatalytic spliceosome P complex. Interacts with PDCD6; the interaction induces translocation of PDCD6 in the cytoplasm. Interacts with PPIL1.

The protein resides in the nucleus. Its subcellular location is the cytoplasm. Required for pre-mRNA splicing as component of the activated spliceosome. Involved in the first step of pre-mRNA splicing. Binds directly to the internal stem-loop (ISL) domain of the U6 snRNA and to the pre-mRNA intron near the 5' splice site during the activation and catalytic phases of the spliceosome cycle. Involved in both translocations of the nuclear SLU7 to the cytoplasm and the cytosolic calcium-binding protein PDCD6 to the nucleus upon cellular stress responses. In Homo sapiens (Human), this protein is Pre-mRNA-splicing factor RBM22 (RBM22).